A 562-amino-acid chain; its full sequence is Bifunctional coenzyme A synthase (562 aa).

A phosphoserine mark is found at S177 and S182. Residues 179-357 form a phosphopantetheine adenylyltransferase region; it reads VARSAKQPVR…HKRPELPPGC (179 aa). One can recognise a DPCK domain in the interval 359-562; that stretch reads VIGLTGISGS…KRISEAPSDP (204 aa). Residue 364–371 coordinates ATP; the sequence is GISGSGKS.

It in the central section; belongs to the eukaryotic CoaD family. As to quaternary structure, monomer. The N-terminus is blocked.

Its subcellular location is the cytoplasm. It is found in the mitochondrion matrix. It catalyses the reaction (R)-4'-phosphopantetheine + ATP + H(+) = 3'-dephospho-CoA + diphosphate. The catalysed reaction is 3'-dephospho-CoA + ATP = ADP + CoA + H(+). It participates in cofactor biosynthesis; coenzyme A biosynthesis; CoA from (R)-pantothenate: step 4/5. The protein operates within cofactor biosynthesis; coenzyme A biosynthesis; CoA from (R)-pantothenate: step 5/5. Functionally, bifunctional enzyme that catalyzes the fourth and fifth sequential steps of CoA biosynthetic pathway. The fourth reaction is catalyzed by the phosphopantetheine adenylyltransferase, coded by the coaD domain; the fifth reaction is catalyzed by the dephospho-CoA kinase, coded by the coaE domain. May act as a point of CoA biosynthesis regulation. The polypeptide is Bifunctional coenzyme A synthase (Sus scrofa (Pig)).